The following is a 588-amino-acid chain: Pre-mRNA 3'-end-processing factor FIP1 (588 aa).

The segment covering 1–10 (MSAGEVERLV) has biased composition (basic and acidic residues). Disordered regions lie at residues 1-81 (MSAG…EDDV), 223-291 (QGRT…ESPD), and 334-588 (VDNN…TPAE). The sufficient for interaction with PAPOLA stretch occupies residues 1–96 (MSAGEVERLV…DIKTGAPQYG (96 aa)). The necessary for stimulating PAPOLA activity stretch occupies residues 1-341 (MSAGEVERLV…TAVDNNFSKP (341 aa)). Composition is skewed to acidic residues over residues 19-40 (GDEE…EEEN) and 66-80 (TEDD…DEDD). 3 positions are modified to phosphoserine: Ser70, Ser72, and Ser74. The interval 122 to 228 (KGVDLDAPGS…FKVQQGRTGN (107 aa)) is sufficient for interaction with CPSF4. Over residues 259–270 (STSSQSQTSTAS) the composition is skewed to low complexity. Over residues 280 to 291 (WQDRYGRAESPD) the composition is skewed to basic and acidic residues. Ser289 carries the post-translational modification Phosphoserine. The span at 340–398 (KPPPFFPPGAPPTHLPPPPFLPPPPTVSTAPPLIPPPGIPITVPPPGFPPPPGAPPPSL) shows a compositional bias: pro residues. Tyr420 is modified (phosphotyrosine). The tract at residues 437-588 (SLVDTSKQWD…QESTEATPAE (152 aa)) is sufficient for interaction with CPSF1 and CSTF3. A compositionally biased stretch (basic and acidic residues) spans 448–486 (YARREKDRDRERDRDRERDRDRDRERERTRERERERDHS). An arg/Asp/Glu-rich domain region spans residues 451 to 484 (REKDRDRERDRDRERDRDRDRERERTRERERERD). The residue at position 486 (Ser486) is a Phosphoserine. Thr488 is subject to Phosphothreonine. A phosphoserine mark is found at Ser490 and Ser494. Basic and acidic residues predominate over residues 495–522 (DEERYRYREYAERGYERHRASREKEERH). Positions 536–545 (KSSRSNSRRR) are enriched in basic residues. Residue Ser548 is modified to Phosphoserine. Over residues 554–564 (HRRHKHKKSKR) the composition is skewed to basic residues.

Belongs to the FIP1 family. Component of the cleavage and polyadenylation specificity factor (CPSF) complex, composed of CPSF1, CPSF2, CPSF3, CPSF4 and FIP1L1. Found in a complex with CPSF1, FIP1L1 and PAPOLA. Interacts with CPSF1, CPSF4, CSTF2 and CSTF3. Interacts with AHCYL1 (when phosphorylated); the interaction is direct and associates AHCYL1 with the CPSF complex and RNA. Interacts with PAPOLA; the interaction seems to be increased by the interaction with AHCYL1. Interacts with NUDT21/CPSF5; this interaction occurs in a RNA sequence-specific manner. Interacts (preferentially via unphosphorylated form and Arg/Glu/Asp-rich domain) with CPSF6 (via Arg/Ser-rich domain); this interaction mediates, at least in part, the interaction between the CFIm and CPSF complexes and may be inhibited by CPSF6 hyper-phosphorylation. Interacts (preferentially via unphosphorylated form and Arg/Asp/Glu-rich domain) with CPSF7 (via Arg/Ser-rich domain); this interaction mediates, at least in part, the interaction between the CFIm and CPSF complexes and may be inhibited by CPSF7 hyper-phosphorylation.

The protein resides in the nucleus. Component of the cleavage and polyadenylation specificity factor (CPSF) complex that plays a key role in pre-mRNA 3'-end formation, recognizing the AAUAAA signal sequence and interacting with poly(A) polymerase and other factors to bring about cleavage and poly(A) addition. FIP1L1 contributes to poly(A) site recognition and stimulates poly(A) addition. Binds to U-rich RNA sequence elements surrounding the poly(A) site. May act to tether poly(A) polymerase to the CPSF complex. This chain is Pre-mRNA 3'-end-processing factor FIP1 (FIP1L1), found in Pongo abelii (Sumatran orangutan).